The chain runs to 962 residues: Villin-5 (962 aa).

6 Gelsolin-like repeats span residues 29–79 (FKPV…DEAG), 150–190 (VRVK…QERA), 262–305 (GQTD…DQRK), 396–453 (LQVW…EDRA), 534–574 (MQAI…EDQE), and 636–677 (LKAT…KKKP). Residues 749–785 (KPKRRVPAYSSRSTVPDKSQPRSRSMTFSPDRARVRG) form a disordered region. Polar residues predominate over residues 758–776 (SSRSTVPDKSQPRSRSMTF). Phosphoserine occurs at positions 777 and 787. A compositionally biased stretch (low complexity) spans 845–862 (EKPTPTSQEPPTSPSSSE). The interval 845-917 (EKPTPTSQEP…LKTDSEDPVS (73 aa)) is disordered. A compositionally biased stretch (polar residues) spans 863 to 875 (ATNQAEAPKSTSE). Residue Ser883 is modified to Phosphoserine. Over residues 889 to 898 (SKEEEAEEES) the composition is skewed to acidic residues. The 66-residue stretch at 897–962 (ESSLPTFPYE…NKLKMSVNLF (66 aa)) folds into the HP domain.

It belongs to the villin/gelsolin family. As to expression, ubiquitous, but expressed preferentially in pollen and stamens.

The protein resides in the cytoplasm. It is found in the cytoskeleton. In terms of biological role, major actin filament stabilizing factor and regulator of actin dynamics. Binds actin and actin filament bundles in a Ca(2+)-insensitive manner, but caps the barbed end of actin filaments and is able to sever them in a calcium-dependent manner. Required for the construction of actin collars in pollen tubes. Acts synergistically with VLN2 (AC O81644) to regulate polarized pollen tube growth. This chain is Villin-5, found in Arabidopsis thaliana (Mouse-ear cress).